The following is a 633-amino-acid chain: UvrABC system protein C (633 aa).

In terms of domain architecture, GIY-YIG spans 37–115 (PKPGVYRMFG…IKSLKPRFNI (79 aa)). The 36-residue stretch at 225 to 260 (NALREDLQTRMAQASEAMDFETAAKLRDRIRAIAAV) folds into the UVR domain.

Belongs to the UvrC family. As to quaternary structure, interacts with UvrB in an incision complex.

The protein localises to the cytoplasm. Functionally, the UvrABC repair system catalyzes the recognition and processing of DNA lesions. UvrC both incises the 5' and 3' sides of the lesion. The N-terminal half is responsible for the 3' incision and the C-terminal half is responsible for the 5' incision. This is UvrABC system protein C from Maricaulis maris (strain MCS10) (Caulobacter maris).